Reading from the N-terminus, the 263-residue chain is Tetraspanin-7 (263 aa).

Residues 1–7 (MVQCSNN) are Cytoplasmic-facing. The helical transmembrane segment at 8-28 (LLGILNFFTFLLSIPILSAGI) threads the bilayer. Residues 29-45 (WLGKNAATECERFLDKP) are Extracellular-facing. The helical transmembrane segment at 46 to 66 (MVVLGIFLMFVSIAGLVGACC) threads the bilayer. Over 67–75 (RVSCLLWLY) the chain is Cytoplasmic. The helical transmembrane segment at 76–96 (LFAMFLLILLGFCFTIFAFAV) threads the bilayer. Residues 97–234 (TNRGAGEVIS…NIKNSWKKVA (138 aa)) are Extracellular-facing. N-linked (GlcNAc...) asparagine glycosylation occurs at asparagine 180. The chain crosses the membrane as a helical span at residues 235–255 (KVNIVFLIFLIIVYSVGCCAF). Topologically, residues 256–263 (RNNRKRSW) are cytoplasmic.

It belongs to the tetraspanin (TM4SF) family.

It is found in the membrane. Functionally, may be involved in the regulation of cell differentiation. The sequence is that of Tetraspanin-7 (TET7) from Arabidopsis thaliana (Mouse-ear cress).